The following is a 409-amino-acid chain: Tryptophan synthase beta chain (409 aa).

Residue Lys-86 is modified to N6-(pyridoxal phosphate)lysine.

It belongs to the TrpB family. In terms of assembly, tetramer of two alpha and two beta chains. Pyridoxal 5'-phosphate is required as a cofactor.

It carries out the reaction (1S,2R)-1-C-(indol-3-yl)glycerol 3-phosphate + L-serine = D-glyceraldehyde 3-phosphate + L-tryptophan + H2O. Its pathway is amino-acid biosynthesis; L-tryptophan biosynthesis; L-tryptophan from chorismate: step 5/5. Functionally, the beta subunit is responsible for the synthesis of L-tryptophan from indole and L-serine. The chain is Tryptophan synthase beta chain from Shewanella pealeana (strain ATCC 700345 / ANG-SQ1).